The primary structure comprises 242 residues: tRNA (guanine-N(1)-)-methyltransferase (242 aa).

S-adenosyl-L-methionine-binding positions include Gly-111 and 130-135; that span reads IGDYVL.

This sequence belongs to the RNA methyltransferase TrmD family. In terms of assembly, homodimer.

It is found in the cytoplasm. The enzyme catalyses guanosine(37) in tRNA + S-adenosyl-L-methionine = N(1)-methylguanosine(37) in tRNA + S-adenosyl-L-homocysteine + H(+). Its function is as follows. Specifically methylates guanosine-37 in various tRNAs. This is tRNA (guanine-N(1)-)-methyltransferase from Onion yellows phytoplasma (strain OY-M).